We begin with the raw amino-acid sequence, 513 residues long: Glycine/sarcosine/betaine reductase complex component C subunit beta (513 aa).

As to quaternary structure, heterooctamer of four alpha and four beta subunits. Component of the glycine, sarcosine and betaine reductase complexes, together with proteins A and B.

The catalysed reaction is acetyl phosphate + [thioredoxin]-disulfide + NH4(+) + H2O = [thioredoxin]-dithiol + glycine + phosphate + H(+). It catalyses the reaction acetyl phosphate + methylamine + [thioredoxin]-disulfide + H2O = sarcosine + [thioredoxin]-dithiol + phosphate + H(+). The enzyme catalyses acetyl phosphate + trimethylamine + [thioredoxin]-disulfide + H2O = glycine betaine + [thioredoxin]-dithiol + phosphate + H(+). Functionally, in the first step of glycine, betaine and sarcosine reductases, the substrate is bound to component PB via a Schiff base intermediate. Then the PB-activated substrate is nucleophilically attacked by the selenol anion of component PA to transform it to a carboxymethylated selenoether and the respective amine. By action of component PC, acetyl phosphate is formed, leaving component PA in its oxidized state. Finally component PA becomes reduced by the thioredoxin system to start a new catalytic cycle of reductive deamination. This is Glycine/sarcosine/betaine reductase complex component C subunit beta (grdC) from Peptoclostridium acidaminophilum (Eubacterium acidaminophilum).